The sequence spans 374 residues: tRNA-specific 2-thiouridylase MnmA (374 aa).

ATP contacts are provided by residues 12-19 (GMSGGVDS) and Met-38. The interval 98 to 100 (NPD) is interaction with target base in tRNA. The active-site Nucleophile is Cys-103. Cys-103 and Cys-207 form a disulfide bridge. An ATP-binding site is contributed by Gly-128. The tract at residues 157–159 (KDQ) is interaction with tRNA. The Cysteine persulfide intermediate role is filled by Cys-207. The segment at 321 to 322 (RY) is interaction with tRNA.

It belongs to the MnmA/TRMU family.

The protein resides in the cytoplasm. It carries out the reaction S-sulfanyl-L-cysteinyl-[protein] + uridine(34) in tRNA + AH2 + ATP = 2-thiouridine(34) in tRNA + L-cysteinyl-[protein] + A + AMP + diphosphate + H(+). Catalyzes the 2-thiolation of uridine at the wobble position (U34) of tRNA, leading to the formation of s(2)U34. The sequence is that of tRNA-specific 2-thiouridylase MnmA from Aliivibrio fischeri (strain ATCC 700601 / ES114) (Vibrio fischeri).